We begin with the raw amino-acid sequence, 115 residues long: Holo-[acyl-carrier-protein] synthase (115 aa).

Residues D8 and E50 each contribute to the Mg(2+) site.

Belongs to the P-Pant transferase superfamily. AcpS family. Mg(2+) is required as a cofactor.

It is found in the cytoplasm. It carries out the reaction apo-[ACP] + CoA = holo-[ACP] + adenosine 3',5'-bisphosphate + H(+). Functionally, transfers the 4'-phosphopantetheine moiety from coenzyme A to a Ser of acyl-carrier-protein. This is Holo-[acyl-carrier-protein] synthase from Renibacterium salmoninarum (strain ATCC 33209 / DSM 20767 / JCM 11484 / NBRC 15589 / NCIMB 2235).